Consider the following 1241-residue polypeptide: RNA polymerase II C-terminal domain phosphatase-like 3 (1241 aa).

7 disordered regions span residues 361–402 (DHDA…TTEG), 428–470 (VFKT…HLIY), 505–525 (ISAP…RDPR), 578–598 (KRQK…WLED), 677–702 (AIQK…VSTP), 720–800 (VLQD…QNGT), and 852–885 (TERD…GPTR). Over residues 368-378 (PSPTRETTPSL) the composition is skewed to polar residues. Positions 441 to 466 (GEPNDGNGDVGGEVSSSVVKSSNPGS) are enriched in low complexity. The span at 677–686 (AIQKPMDPRR) shows a compositional bias: basic and acidic residues. Polar residues-rich tracts occupy residues 691-702 (PGSSVQPGVSTP) and 791-800 (PRQNISQNGT). The span at 871-881 (SVSAASVTAAA) shows a compositional bias: low complexity. Residues 923–1103 (FASQKLSLVL…GLLGPSLLEL (181 aa)) form the FCP1 homology domain. The region spanning 1146–1239 (EQRKILAGCR…QRANENLYAI (94 aa)) is the BRCT domain.

As to quaternary structure, interacts with RAP74. It depends on Mg(2+) as a cofactor. Requires Co(2+) as cofactor. The cofactor is Mn(2+).

It localises to the nucleus. It catalyses the reaction O-phospho-L-seryl-[protein] + H2O = L-seryl-[protein] + phosphate. It carries out the reaction O-phospho-L-threonyl-[protein] + H2O = L-threonyl-[protein] + phosphate. In terms of biological role, completely dephosphorylates 'Ser-2', and partially 'Ser-5' and 'Ser-7' of the heptad repeats YSPTSPS in the C-terminal domain (CTD) of the largest RNA polymerase II subunit (RPB1). Involved in defense response. Acts as a negative regulator of immune gene expression and immunity to pathogen infections. Preferentially dephosphorylates 'Ser-2' of RNA polymerase II CTD. This counterregulates the MAP kinase (MAPK) or cyclin-dependent kinase C (CDKC)-mediated phosphorylation of CTD in response to pathogens and upon perception of microbe-associated molecular patterns (MAMPs). MAPKs phosphorylate and activate CDKCs, which are CTD kinases that positively regulate plant innate immunity. Acts as a negative regulator of stress gene transcription involved in abscisic acid (ABA) mediated signaling pathway and cold resistance. Acts as a post-transcriptional gene silencing (PTGS) suppressor. The protein is RNA polymerase II C-terminal domain phosphatase-like 3 of Arabidopsis thaliana (Mouse-ear cress).